Here is a 252-residue protein sequence, read N- to C-terminus: Imidazole glycerol phosphate synthase subunit HisF (252 aa).

Catalysis depends on residues Asp12 and Asp131.

Belongs to the HisA/HisF family. In terms of assembly, heterodimer of HisH and HisF.

It is found in the cytoplasm. The enzyme catalyses 5-[(5-phospho-1-deoxy-D-ribulos-1-ylimino)methylamino]-1-(5-phospho-beta-D-ribosyl)imidazole-4-carboxamide + L-glutamine = D-erythro-1-(imidazol-4-yl)glycerol 3-phosphate + 5-amino-1-(5-phospho-beta-D-ribosyl)imidazole-4-carboxamide + L-glutamate + H(+). It participates in amino-acid biosynthesis; L-histidine biosynthesis; L-histidine from 5-phospho-alpha-D-ribose 1-diphosphate: step 5/9. IGPS catalyzes the conversion of PRFAR and glutamine to IGP, AICAR and glutamate. The HisF subunit catalyzes the cyclization activity that produces IGP and AICAR from PRFAR using the ammonia provided by the HisH subunit. This is Imidazole glycerol phosphate synthase subunit HisF from Thermus thermophilus (strain ATCC 27634 / DSM 579 / HB8).